A 353-amino-acid polypeptide reads, in one-letter code: UPF0283 membrane protein YcjF (353 aa).

3 consecutive transmembrane segments (helical) span residues 70–90 (MVMG…VQWT), 100–120 (VALG…GSVV), and 213–233 (ESTL…FIAW).

The protein belongs to the UPF0283 family.

It localises to the cell inner membrane. The chain is UPF0283 membrane protein YcjF from Shigella sonnei (strain Ss046).